We begin with the raw amino-acid sequence, 347 residues long: MRIEQDLKLGFKDVLFRPKRSTLKSRSQVELTRDFTFKHSGRQWSGVPIIAANMDSVGSFEMAASLSKHNVMTAIHKHYTVDDWAGFVKNNDAAVLNNAMVSTGTSEADFQKTKDIMALTEDLIFICIDIANGYSEHLVEYVQKVRAEFPTKVISAGNVVTGDMVEELILAGADIVKVGIGPGSVCTTRVKTGVGYPQLSAIIECSDAAHGLGGRIIGDGGCSCAGDVSKAFGGGADFVMLGGMLAGHEESNGEVIEKDGEMFMKFYGMSSQSAMDKHSGGVANYRAAEGKTVLLPFRGPVENTIQDIMGGIRSTCTYVGAAQLKELTKRATFIRVQEQENNVYGKE.

Residue Ala108–Ala131 coordinates NADP(+). K(+) contacts are provided by Gly181 and Gly183. Catalysis depends on Cys186, which acts as the Thioimidate intermediate. Ile216 to Val239 provides a ligand contact to NADP(+).

It belongs to the IMPDH/GMPR family. GuaC type 1 subfamily. Homotetramer.

It carries out the reaction IMP + NH4(+) + NADP(+) = GMP + NADPH + 2 H(+). Catalyzes the irreversible NADPH-dependent deamination of GMP to IMP. It functions in the conversion of nucleobase, nucleoside and nucleotide derivatives of G to A nucleotides, and in maintaining the intracellular balance of A and G nucleotides. This is GMP reductase from Photobacterium profundum (strain SS9).